Consider the following 326-residue polypeptide: Toluene-4-monooxygenase system, ferredoxin--NAD(+) reductase component (326 aa).

The 92-residue stretch at 1–92 (MFNIQSDDLL…DLKIKVINRA (92 aa)) folds into the 2Fe-2S ferredoxin-type domain. [2Fe-2S] cluster is bound by residues C36, C41, C44, and C76. Positions 95-326 (RASHPPKRFS…FEAIHFDRFF (232 aa)) are ferredoxin-reductase. In terms of domain architecture, FAD-binding FR-type spans 100 to 195 (PKRFSTRVVS…DGPYGLSVLK (96 aa)). FAD is bound by residues 146–149 (RAYS), 162–164 (IVK), and 170–172 (KVS).

The protein belongs to the bacterial ring-hydroxylating dioxygenase ferredoxin reductase family. As to quaternary structure, monomer. The alkene monooxygenase multicomponent enzyme system is composed of an electron transfer component and a monooxygenase component interacting with the effector protein TmoD. The electron transfer component is composed of a ferredoxin reductase (TmoF) and a ferredoxin (TmoC), and the monooxygenase component is formed by a heterohexamer (dimer of heterotrimers) of two alpha subunits (TmoA), two beta subunits (TmoE) and two gamma subunits (TmoB). FAD serves as cofactor. It depends on [2Fe-2S] cluster as a cofactor.

The enzyme catalyses 2 reduced [2Fe-2S]-[ferredoxin] + NAD(+) + H(+) = 2 oxidized [2Fe-2S]-[ferredoxin] + NADH. It participates in xenobiotic degradation; toluene degradation. Reductase component of the toluene-4-monooxygenase multicomponent enzyme system which catalyzes the O2- and NADH-dependent hydroxylation of toluene to form p-cresol. Ferredoxin reductase catalyzes the transfer of electrons from NADH to ferredoxin (TmoC). The chain is Toluene-4-monooxygenase system, ferredoxin--NAD(+) reductase component from Ectopseudomonas mendocina (Pseudomonas mendocina).